The following is a 361-amino-acid chain: Phospho-N-acetylmuramoyl-pentapeptide-transferase (361 aa).

10 helical membrane-spanning segments follow: residues 25-45 (TGGAMVTGALFVFMFGPWIID), 72-92 (TPTMGGLMILSGLTVGTVLWA), 95-115 (LNPYVWIVLAVTLGFGFVGFY), 135-155 (LLIEFIIAGAACFALVWLGRA), 169-189 (VMLNLGWAFVVFGAFVVVGAG), 200-220 (GLAIVPVMIAAASFGLISYLA), 240-260 (LAVLCGALLGAGLGFLWFNAP), 264-284 (IFMGDTGSLALGGMLGSIAVA), 289-309 (IVLAVIGGLFVLEAVSVIVQV), and 338-358 (QIVIRFWIIAVMLALAGLSTL).

It belongs to the glycosyltransferase 4 family. MraY subfamily. Mg(2+) serves as cofactor.

The protein localises to the cell inner membrane. It carries out the reaction UDP-N-acetyl-alpha-D-muramoyl-L-alanyl-gamma-D-glutamyl-meso-2,6-diaminopimeloyl-D-alanyl-D-alanine + di-trans,octa-cis-undecaprenyl phosphate = di-trans,octa-cis-undecaprenyl diphospho-N-acetyl-alpha-D-muramoyl-L-alanyl-D-glutamyl-meso-2,6-diaminopimeloyl-D-alanyl-D-alanine + UMP. It functions in the pathway cell wall biogenesis; peptidoglycan biosynthesis. Catalyzes the initial step of the lipid cycle reactions in the biosynthesis of the cell wall peptidoglycan: transfers peptidoglycan precursor phospho-MurNAc-pentapeptide from UDP-MurNAc-pentapeptide onto the lipid carrier undecaprenyl phosphate, yielding undecaprenyl-pyrophosphoryl-MurNAc-pentapeptide, known as lipid I. This chain is Phospho-N-acetylmuramoyl-pentapeptide-transferase, found in Rhodopseudomonas palustris (strain TIE-1).